Here is a 346-residue protein sequence, read N- to C-terminus: Histidinol-phosphate aminotransferase (346 aa).

Residue Lys209 is modified to N6-(pyridoxal phosphate)lysine.

Belongs to the class-II pyridoxal-phosphate-dependent aminotransferase family. Histidinol-phosphate aminotransferase subfamily. In terms of assembly, homodimer. Pyridoxal 5'-phosphate is required as a cofactor.

The catalysed reaction is L-histidinol phosphate + 2-oxoglutarate = 3-(imidazol-4-yl)-2-oxopropyl phosphate + L-glutamate. It functions in the pathway amino-acid biosynthesis; L-histidine biosynthesis; L-histidine from 5-phospho-alpha-D-ribose 1-diphosphate: step 7/9. The sequence is that of Histidinol-phosphate aminotransferase from Vibrio parahaemolyticus serotype O3:K6 (strain RIMD 2210633).